The chain runs to 688 residues: G protein-coupled receptor kinase 3 (688 aa).

The interval 1-190 (MADLEAVLAD…ELNIHLSMND (190 aa)) is N-terminal. The 122-residue stretch at 54–175 (TFDKIFNQKI…MESDKFTRFC (122 aa)) folds into the RGS domain. The region spanning 191–453 (FSVHRIIGRG…ARELKEHIFF (263 aa)) is the Protein kinase domain. ATP is bound by residues 197-205 (IGRGGFGEV) and Lys220. The Proton acceptor role is filled by Asp317. Residues 454-521 (KGIDWQHVYL…VISERWQQEV (68 aa)) enclose the AGC-kinase C-terminal domain. The 95-residue stretch at 558–652 (DCIMHGYMLK…WLKELTCTFN (95 aa)) folds into the PH domain.

This sequence belongs to the protein kinase superfamily. AGC Ser/Thr protein kinase family. GPRK subfamily. In terms of assembly, interacts with GIT1. In terms of processing, ubiquitinated.

Its subcellular location is the postsynapse. It localises to the presynapse. It carries out the reaction [beta-adrenergic receptor] + ATP = [beta-adrenergic receptor]-phosphate + ADP + H(+). In terms of biological role, specifically phosphorylates the agonist-occupied form of the beta-adrenergic and closely related receptors. This is G protein-coupled receptor kinase 3 from Mus musculus (Mouse).